Reading from the N-terminus, the 237-residue chain is Uridylate kinase (237 aa).

Lysine 13–glycine 16 contacts ATP. Glycine 53 is a binding site for UMP. ATP contacts are provided by glycine 54 and arginine 58. UMP-binding positions include aspartate 73 and alanine 134 to threonine 141. 3 residues coordinate ATP: asparagine 162, tyrosine 168, and aspartate 171.

This sequence belongs to the UMP kinase family. As to quaternary structure, homohexamer.

Its subcellular location is the cytoplasm. It carries out the reaction UMP + ATP = UDP + ADP. It participates in pyrimidine metabolism; CTP biosynthesis via de novo pathway; UDP from UMP (UMPK route): step 1/1. With respect to regulation, inhibited by UTP. In terms of biological role, catalyzes the reversible phosphorylation of UMP to UDP. The chain is Uridylate kinase from Leifsonia xyli subsp. xyli (strain CTCB07).